A 295-amino-acid polypeptide reads, in one-letter code: Acetylglutamate kinase (295 aa).

Substrate is bound by residues 66–67 (GG), R88, and N193.

The protein belongs to the acetylglutamate kinase family. ArgB subfamily.

It localises to the cytoplasm. The catalysed reaction is N-acetyl-L-glutamate + ATP = N-acetyl-L-glutamyl 5-phosphate + ADP. The protein operates within amino-acid biosynthesis; L-arginine biosynthesis; N(2)-acetyl-L-ornithine from L-glutamate: step 2/4. Functionally, catalyzes the ATP-dependent phosphorylation of N-acetyl-L-glutamate. The chain is Acetylglutamate kinase from Allorhizobium ampelinum (strain ATCC BAA-846 / DSM 112012 / S4) (Agrobacterium vitis (strain S4)).